The primary structure comprises 134 residues: Putative pre-16S rRNA nuclease (134 aa).

This sequence belongs to the YqgF nuclease family.

Its subcellular location is the cytoplasm. Functionally, could be a nuclease involved in processing of the 5'-end of pre-16S rRNA. This is Putative pre-16S rRNA nuclease from Helicobacter pylori (strain G27).